The sequence spans 351 residues: Transmembrane and coiled-coil domain-containing protein 5B (351 aa).

Residues 17–214 (EIPKLEITKQ…WRSSIQSAKT (198 aa)) adopt a coiled-coil conformation. Residues 292 to 312 (IFVVMIFFRLLGYVLFYLQYI) traverse the membrane as a helical segment.

The protein belongs to the TMCO5 family.

It localises to the membrane. This is Transmembrane and coiled-coil domain-containing protein 5B (TMCO5B) from Bos taurus (Bovine).